The primary structure comprises 781 residues: Putative UPF0313 protein YPO0674/y3502/YP_2990 (781 aa).

Residues 368 to 646 (AYDMIRFSIN…KALLRYHDPA (279 aa)) form the Radical SAM core domain. [4Fe-4S] cluster contacts are provided by C382, C386, and C389. The disordered stretch occupies residues 681 to 781 (REARRALRHH…AGSRGKNRQH (101 aa)). Over residues 696 to 708 (KHTSITRQRQPSN) the composition is skewed to polar residues. The segment covering 726–750 (TSSAHSTSANQSTSANQSTSAAHST) has biased composition (low complexity).

Belongs to the UPF0313 family. The cofactor is [4Fe-4S] cluster.

This is Putative UPF0313 protein YPO0674/y3502/YP_2990 from Yersinia pestis.